We begin with the raw amino-acid sequence, 220 residues long: UPF0319 protein YccT (220 aa).

An N-terminal signal peptide occupies residues 1–20; it reads MKTGALATFLALCLPVTVFA.

Belongs to the UPF0319 family.

The sequence is that of UPF0319 protein YccT from Salmonella enteritidis PT4 (strain P125109).